Here is a 799-residue protein sequence, read N- to C-terminus: Integrin beta-1 (799 aa).

The signal sequence occupies residues Met1–Gly20. Residues Gln21–Asp729 are Extracellular-facing. Residues Arg26–His76 form the PSI domain. Intrachain disulfides connect Cys27–Cys45, Cys35–Cys465, Cys38–Cys64, Cys48–Cys75, Cys207–Cys213, Cys261–Cys301, Cys401–Cys415, Cys435–Cys463, Cys467–Cys487, Cys478–Cys490, Cys492–Cys501, Cys503–Cys534, Cys517–Cys532, Cys526–Cys537, Cys539–Cys554, Cys556–Cys577, Cys561–Cys575, Cys569–Cys580, Cys582–Cys591, Cys593–Cys616, Cys600–Cys614, Cys608–Cys619, Cys621–Cys631, Cys634–Cys637, Cys641–Cys692, Cys647–Cys666, Cys650–Cys662, and Cys700–Cys724. N-linked (GlcNAc...) asparagine glycosylation is found at Asn50, Asn94, and Asn97. The VWFA domain maps to Asp140–Leu378. Mg(2+) is bound by residues Ser152 and Ser154. 4 residues coordinate Ca(2+): Ser154, Asp157, Asp158, and Glu189. A CX3CL1-binding region spans residues Cys207–Cys213. Residue Asn212 is glycosylated (N-linked (GlcNAc...) asparagine). Residues Asn244, Asp246, Pro248, and Glu249 each coordinate Ca(2+). Glu249 is a binding site for Mg(2+). Asn269 carries an N-linked (GlcNAc...) asparagine glycan. The CX3CL1-binding stretch occupies residues Leu295–Tyr314. Residue Gly362 coordinates Ca(2+). 3 N-linked (GlcNAc...) asparagine glycosylation sites follow: Asn363, Asn406, and Asn417. The segment at Ile383–Asn466 is interaction with TMEM182. 4 consecutive I-EGF domains span residues Cys467–Glu502, Cys503–Glu555, Cys556–Asp592, and Cys593–Glu632. N-linked (GlcNAc...) asparagine glycosylation occurs at Asn482. Asn521 is a glycosylation site (N-linked (GlcNAc...) asparagine). An N-linked (GlcNAc...) asparagine glycan is attached at Asn585. An N-linked (GlcNAc...) asparagine glycan is attached at Asn670. Residues Ile730–Trp752 traverse the membrane as a helical segment. The Cytoplasmic portion of the chain corresponds to Lys753–Lys799. The segment at Glu763–Glu768 is signal for sorting from recycling endosomes; interaction with ACAP1. Thr778 bears the Phosphothreonine mark. Residue Tyr784 is modified to Phosphotyrosine. Ser786 carries the post-translational modification Phosphoserine. Residues Ser786 to Asn793 form an interaction with ITGB1BP1 region. Position 790 is a phosphothreonine (Thr790). Lys795 carries the post-translational modification N6-acetyllysine; alternate. Lys795 participates in a covalent cross-link: Glycyl lysine isopeptide (Lys-Gly) (interchain with G-Cter in SUMO1); alternate.

It belongs to the integrin beta chain family. As to quaternary structure, interacts with seprase FAP (seprase); the interaction occurs at the cell surface of invadopodia membrane in a collagen-dependent manner. Heterodimer of an alpha and a beta subunit. Beta-1 associates with either alpha-1, alpha-2, alpha-3, alpha-4, alpha-5, alpha-6, alpha-7, alpha-8, alpha-9, alpha-10, alpha-11 or alpha-V. ITGA6:ITGB1 is found in a complex with CD9; interaction takes place in oocytes and is involved in sperm-egg fusion. Binds LGALS3BP and NMRK2, when associated with alpha-7, but not with alpha-5. Interacts with FLNA, FLNB, FLNC and RANBP9. Interacts with KRT1 in the presence of RACK1 and SRC. Interacts with JAML; integrin alpha-4/beta-1 may regulate leukocyte to endothelial cells adhesion by controlling JAML homodimerization. Interacts with RAB21. Interacts (via the cytoplasmic region) with RAB25 (via the hypervariable C-terminal region). Interacts with MYO10. Interacts with ITGB1BP1 (via C-terminal region); the interaction is a prerequisite for focal adhesion disassembly. Interacts with TLN1; the interaction is prevented by competitive binding of ITGB1BP1. Interacts with ACAP1; required for ITGB1 recycling. Interacts with ASAP3. Interacts with FERMT2; the interaction is inhibited in presence of ITGB1BP1. Interacts with DAB2. Interacts with FGR and HCK. Interacts with alpha-7A and alpha-7B in adult skeletal muscle. Interacts with alpha-7B in cardiomyocytes of adult heart. Interacts with EMP2; the interaction may be direct or indirect and ITGB1 has a heterodimer form. ITGA5:ITGB1 interacts with CCN3. ITGA4:ITGB1 is found in a ternary complex with CX3CR1 and CX3CL1. ITGA5:ITGB1 interacts with FBN1. ITGA5:ITGB1 acts as a receptor for fibronectin FN1 and mediates R-G-D-dependent cell adhesion to FN1. ITGA5:ITGB1 interacts with IL1B. Interacts with MDK. ITGA4:ITGB1 interacts with MDK; this interaction mediates MDK-induced osteoblast cells migration through PXN phosphorylation. ITGA6:ITGB1 interacts with MDK; this interaction mediates MDK-induced neurite-outgrowth. ITGA5:ITGB1 interacts with ACE2. Interacts with TMEM182 and LAMB1. Interacts with tensin TNS3; TNS3 also interacts with PEAK1, thus acting as an adapter molecule to bridge the association of PEAK1 with ITGB1. Interacts with tensin TNS4; the interaction displaces tensin TNS3 from the ITGB1 cytoplasmic tail and promotes ITGB1 stability. Integrin ITGA9:ITGB1 interacts with SPP1/OPN (via N-terminus). Integrin ITGA9:ITGB1 interacts with TNC/TNFN3 (via the 3rd Fibronectin type-III domain). Integrins ITGA4:ITGB1 and ITGA9:ITGB1 interact with SVEP1 (via Sushi domain 21); thereby inhibit Ca(2+) intracellular signaling and as a result repress vasocontraction. ITGA4:ITGB1 and ITGA5:ITGB1 interacts with SELP. ITGA5:ITGB1 interacts with IGFBP1. ITGA4:ITGB1 interacts with BCAM. Interacts with ADGRG6.

The protein resides in the cell membrane. Its subcellular location is the cell projection. It localises to the invadopodium membrane. The protein localises to the ruffle membrane. It is found in the recycling endosome. The protein resides in the melanosome. Its subcellular location is the lamellipodium. It localises to the ruffle. The protein localises to the cell junction. It is found in the focal adhesion. Its function is as follows. Integrins alpha-1/beta-1, alpha-2/beta-1, alpha-10/beta-1 and alpha-11/beta-1 are receptors for collagen. Integrins alpha-1/beta-1 and alpha-2/beta-2 recognize the proline-hydroxylated sequence G-F-P-G-E-R in collagen. Integrins alpha-2/beta-1, alpha-3/beta-1, alpha-4/beta-1, alpha-5/beta-1, alpha-8/beta-1, alpha-10/beta-1, alpha-11/beta-1 and alpha-V/beta-1 are receptors for fibronectin. Alpha-4/beta-1 recognizes one or more domains within the alternatively spliced CS-1 and CS-5 regions of fibronectin. Integrin alpha-5/beta-1 is a receptor for fibrinogen. Integrin alpha-1/beta-1, alpha-2/beta-1, alpha-6/beta-1 and alpha-7/beta-1 are receptors for lamimin. Integrin alpha-6/beta-1 (ITGA6:ITGB1) is present in oocytes and is involved in sperm-egg fusion. Integrin alpha-4/beta-1 is a receptor for VCAM1 and recognizes the sequence Q-I-D-S in VCAM1. Integrin alpha-9/beta-1 is a receptor for VCAM1, cytotactin and osteopontin. It recognizes the sequence A-E-I-D-G-I-E-L in cytotactin. Integrin alpha-3/beta-1 is a receptor for epiligrin, thrombospondin and CSPG4. Integrin alpha-3/beta-1 provides a docking site for FAP (seprase) at invadopodia plasma membranes in a collagen-dependent manner and hence may participate in the adhesion, formation of invadopodia and matrix degradation processes, promoting cell invasion. Alpha-3/beta-1 may mediate with LGALS3 the stimulation by CSPG4 of endothelial cells migration. Integrin alpha-V/beta-1 is a receptor for vitronectin. Beta-1 integrins recognize the sequence R-G-D in a wide array of ligands. When associated with alpha-7/beta-1 integrin, regulates cell adhesion and laminin matrix deposition. Involved in promoting endothelial cell motility and angiogenesis. Involved in osteoblast compaction through the fibronectin fibrillogenesis cell-mediated matrix assembly process and the formation of mineralized bone nodules. May be involved in up-regulation of the activity of kinases such as PKC via binding to KRT1. Together with KRT1 and RACK1, serves as a platform for SRC activation or inactivation. Plays a mechanistic adhesive role during telophase, required for the successful completion of cytokinesis. ITGA4:ITGB1 binds to fractalkine (CX3CL1) and may act as its coreceptor in CX3CR1-dependent fractalkine signaling. ITGA4:ITGB1 and ITGA5:ITGB1 bind to PLA2G2A via a site (site 2) which is distinct from the classical ligand-binding site (site 1) and this induces integrin conformational changes and enhanced ligand binding to site 1. ITGA5:ITGB1 acts as a receptor for fibrillin-1 (FBN1) and mediates R-G-D-dependent cell adhesion to FBN1. ITGA5:ITGB1 is a receptor for IL1B and binding is essential for IL1B signaling. ITGA5:ITGB3 is a receptor for soluble CD40LG and is required for CD40/CD40LG signaling. Plays an important role in myoblast differentiation and fusion during skeletal myogenesis. ITGA9:ITGB1 may play a crucial role in SVEP1/polydom-mediated myoblast cell adhesion. Integrins ITGA9:ITGB1 and ITGA4:ITGB1 repress PRKCA-mediated L-type voltage-gated channel Ca(2+) influx and ROCK-mediated calcium sensitivity in vascular smooth muscle cells via their interaction with SVEP1, thereby inhibit vasocontraction. This chain is Integrin beta-1 (Itgb1), found in Rattus norvegicus (Rat).